Reading from the N-terminus, the 183-residue chain is uncharacterized protein (183 aa).

This is an uncharacterized protein from Archaeoglobus fulgidus (strain ATCC 49558 / DSM 4304 / JCM 9628 / NBRC 100126 / VC-16).